Consider the following 322-residue polypeptide: Phosphatidylserine decarboxylase proenzyme (322 aa).

Residues aspartate 90, histidine 147, and serine 254 each act as charge relay system; for autoendoproteolytic cleavage activity in the active site. Serine 254 acts as the Schiff-base intermediate with substrate; via pyruvic acid; for decarboxylase activity in catalysis. Serine 254 is modified (pyruvic acid (Ser); by autocatalysis). The disordered stretch occupies residues 293-322; sequence PDAEPAPLPAEEIEAEHDASPLVDDKKDQV. Over residues 308-322 the composition is skewed to basic and acidic residues; it reads EHDASPLVDDKKDQV.

This sequence belongs to the phosphatidylserine decarboxylase family. PSD-B subfamily. Prokaryotic type I sub-subfamily. In terms of assembly, heterodimer of a large membrane-associated beta subunit and a small pyruvoyl-containing alpha subunit. The cofactor is pyruvate. Post-translationally, is synthesized initially as an inactive proenzyme. Formation of the active enzyme involves a self-maturation process in which the active site pyruvoyl group is generated from an internal serine residue via an autocatalytic post-translational modification. Two non-identical subunits are generated from the proenzyme in this reaction, and the pyruvate is formed at the N-terminus of the alpha chain, which is derived from the carboxyl end of the proenzyme. The autoendoproteolytic cleavage occurs by a canonical serine protease mechanism, in which the side chain hydroxyl group of the serine supplies its oxygen atom to form the C-terminus of the beta chain, while the remainder of the serine residue undergoes an oxidative deamination to produce ammonia and the pyruvoyl prosthetic group on the alpha chain. During this reaction, the Ser that is part of the protease active site of the proenzyme becomes the pyruvoyl prosthetic group, which constitutes an essential element of the active site of the mature decarboxylase.

The protein localises to the cell membrane. It catalyses the reaction a 1,2-diacyl-sn-glycero-3-phospho-L-serine + H(+) = a 1,2-diacyl-sn-glycero-3-phosphoethanolamine + CO2. It functions in the pathway phospholipid metabolism; phosphatidylethanolamine biosynthesis; phosphatidylethanolamine from CDP-diacylglycerol: step 2/2. Its function is as follows. Catalyzes the formation of phosphatidylethanolamine (PtdEtn) from phosphatidylserine (PtdSer). The polypeptide is Phosphatidylserine decarboxylase proenzyme (Escherichia coli O9:H4 (strain HS)).